The chain runs to 286 residues: 33 kDa chaperonin (286 aa).

Intrachain disulfides connect C225/C227 and C258/C261.

This sequence belongs to the HSP33 family. In terms of processing, under oxidizing conditions two disulfide bonds are formed involving the reactive cysteines. Under reducing conditions zinc is bound to the reactive cysteines and the protein is inactive.

It localises to the cytoplasm. In terms of biological role, redox regulated molecular chaperone. Protects both thermally unfolding and oxidatively damaged proteins from irreversible aggregation. Plays an important role in the bacterial defense system toward oxidative stress. The chain is 33 kDa chaperonin from Shewanella oneidensis (strain ATCC 700550 / JCM 31522 / CIP 106686 / LMG 19005 / NCIMB 14063 / MR-1).